The sequence spans 760 residues: DEAD-box ATP-dependent RNA helicase 24 (760 aa).

Disordered stretches follow at residues methionine 1 to aspartate 76 and glutamine 90 to aspartate 113. Over residues asparagine 14 to proline 27 the composition is skewed to polar residues. Residues asparagine 41–glutamate 64 show a composition bias toward acidic residues. Residues lysine 99 to aspartate 109 show a composition bias toward basic and acidic residues. Serine 160 carries the post-translational modification Phosphoserine. Residues lysine 228–cysteine 256 carry the Q motif motif. In terms of domain architecture, Helicase ATP-binding spans leucine 259–valine 434. Alanine 272 to threonine 279 contacts ATP. Positions aspartate 382–aspartate 385 match the DEAD box motif. The region spanning lysine 459–alanine 608 is the Helicase C-terminal domain. Disordered regions lie at residues leucine 604–arginine 638, glycine 647–glycine 666, and phenylalanine 706–asparagine 760. Over residues lysine 615–arginine 628 the composition is skewed to basic residues. A compositionally biased stretch (gly residues) spans glycine 629 to arginine 638. Over residues serine 649–glycine 666 the composition is skewed to polar residues. A compositionally biased stretch (gly residues) spans valine 707–methionine 716. A compositionally biased stretch (polar residues) spans arginine 718–alanine 732. A compositionally biased stretch (low complexity) spans serine 733–serine 745. Over residues arginine 750–asparagine 760 the composition is skewed to basic residues.

It belongs to the DEAD box helicase family.

The enzyme catalyses ATP + H2O = ADP + phosphate + H(+). The chain is DEAD-box ATP-dependent RNA helicase 24 (RH24) from Arabidopsis thaliana (Mouse-ear cress).